A 215-amino-acid chain; its full sequence is Octanoyltransferase (215 aa).

In terms of domain architecture, BPL/LPL catalytic spans Pro-31–Glu-206. Substrate is bound by residues Arg-70–His-77, Ser-137–Gly-139, and Gly-150–Ala-152. The Acyl-thioester intermediate role is filled by Cys-168.

It belongs to the LipB family.

Its subcellular location is the cytoplasm. It catalyses the reaction octanoyl-[ACP] + L-lysyl-[protein] = N(6)-octanoyl-L-lysyl-[protein] + holo-[ACP] + H(+). The protein operates within protein modification; protein lipoylation via endogenous pathway; protein N(6)-(lipoyl)lysine from octanoyl-[acyl-carrier-protein]: step 1/2. Catalyzes the transfer of endogenously produced octanoic acid from octanoyl-acyl-carrier-protein onto the lipoyl domains of lipoate-dependent enzymes. Lipoyl-ACP can also act as a substrate although octanoyl-ACP is likely to be the physiological substrate. This chain is Octanoyltransferase, found in Pseudomonas putida (strain GB-1).